Reading from the N-terminus, the 127-residue chain is MKAIYALLAVVALALVAVSLFSQSDSMEGWYSYQEGKKLSEEQKKEMFVFIGTSECGVCKRFKEFFRSNQSAMEFIRKNYIPVYVDAMREKTPVRVTFVPVFCTGFDGNLSCFSTAFPEELMMLLEK.

Residues methionine 1–serine 26 form the signal peptide.

This is an uncharacterized protein from Archaeoglobus fulgidus (strain ATCC 49558 / DSM 4304 / JCM 9628 / NBRC 100126 / VC-16).